The primary structure comprises 425 residues: Protein CLP1 homolog (425 aa).

ATP is bound by residues Glu18, Lys59, and 121–126 (DVGKST).

Belongs to the Clp1 family. Clp1 subfamily.

The protein resides in the nucleus. Its function is as follows. Required for endonucleolytic cleavage during polyadenylation-dependent pre-mRNA 3'-end formation. The polypeptide is Protein CLP1 homolog (cbc) (Drosophila persimilis (Fruit fly)).